The following is a 576-amino-acid chain: Arginine--tRNA ligase (576 aa).

Positions 122–132 (PNVAKEMHVGH) match the 'HIGH' region motif.

It belongs to the class-I aminoacyl-tRNA synthetase family. Monomer.

It is found in the cytoplasm. It carries out the reaction tRNA(Arg) + L-arginine + ATP = L-arginyl-tRNA(Arg) + AMP + diphosphate. This is Arginine--tRNA ligase from Erwinia tasmaniensis (strain DSM 17950 / CFBP 7177 / CIP 109463 / NCPPB 4357 / Et1/99).